A 262-amino-acid chain; its full sequence is Regulatory protein RecX (262 aa).

It belongs to the RecX family.

It is found in the cytoplasm. In terms of biological role, modulates RecA activity. In Photobacterium profundum (strain SS9), this protein is Regulatory protein RecX.